Consider the following 271-residue polypeptide: Phosphatidylinositol transfer protein beta isoform (271 aa).

N6-acetyllysine is present on Lys-215. Residue Ser-262 is modified to Phosphoserine; by PKC.

It belongs to the PtdIns transfer protein family. PI transfer class I subfamily. Post-translationally, constitutive phosphorylation of Ser-262 has no effect on phospholipid transfer activity but is required for Golgi targeting.

The protein resides in the golgi apparatus. It is found in the golgi apparatus membrane. Its subcellular location is the endoplasmic reticulum membrane. It catalyses the reaction a 1,2-diacyl-sn-glycero-3-phosphocholine(in) = a 1,2-diacyl-sn-glycero-3-phosphocholine(out). It carries out the reaction a 1,2-diacyl-sn-glycero-3-phospho-(1D-myo-inositol)(in) = a 1,2-diacyl-sn-glycero-3-phospho-(1D-myo-inositol)(out). The enzyme catalyses an N-(acyl)-sphingosylphosphocholine(in) = an N-(acyl)-sphingosylphosphocholine(out). Catalyzes the transfer of phosphatidylinositol, phosphatidylcholine and sphingomyelin between membranes. Required for COPI-mediated retrograde transport from the Golgi to the endoplasmic reticulum; phosphatidylinositol and phosphatidylcholine transfer activity is essential for this function. The polypeptide is Phosphatidylinositol transfer protein beta isoform (Pitpnb) (Mus musculus (Mouse)).